We begin with the raw amino-acid sequence, 551 residues long: Palmdelphin (551 aa).

Residue M1 is modified to N-acetylmethionine. The stretch at Q12 to I106 forms a coiled coil. Residue K125 forms a Glycyl lysine isopeptide (Lys-Gly) (interchain with G-Cter in SUMO2) linkage. Position 135 is a phosphoserine (S135). K178 participates in a covalent cross-link: Glycyl lysine isopeptide (Lys-Gly) (interchain with G-Cter in SUMO1); alternate. K178 participates in a covalent cross-link: Glycyl lysine isopeptide (Lys-Gly) (interchain with G-Cter in SUMO2); alternate. Over residues E247–E258 the composition is skewed to basic and acidic residues. The disordered stretch occupies residues E247–C266. Phosphothreonine is present on T270. Disordered regions lie at residues L294–E390 and A451–D533. Residues S321 and S349 each carry the phosphoserine modification. Over residues H341 to E353 the composition is skewed to polar residues. The span at S354–P365 shows a compositional bias: basic and acidic residues. 7 positions are modified to phosphoserine: S370, S375, S384, S385, S498, S515, and S520.

Belongs to the paralemmin family. Interacts with GLUL. In terms of processing, phosphorylated. In terms of tissue distribution, ubiquitous. Expressed at highest levels in the heart and lung.

Its subcellular location is the cytoplasm. The protein resides in the cell projection. It is found in the dendrite. It localises to the dendritic spine. The protein is Palmdelphin (Palmd) of Mus musculus (Mouse).